Reading from the N-terminus, the 287-residue chain is Movement protein (287 aa).

This sequence belongs to the nucleorhabdovirus type-1 movement protein family.

Transports viral genome to neighboring plant cells directly through plasmosdesmata, without any budding. The movement protein allows efficient cell to cell propagation, by bypassing the host cell wall barrier. The polypeptide is Movement protein (3) (Colocasia esculenta (Wild taro)).